Here is a 38-residue protein sequence, read N- to C-terminus: Large ribosomal subunit protein bL36 (38 aa).

It belongs to the bacterial ribosomal protein bL36 family.

This Psychrobacter arcticus (strain DSM 17307 / VKM B-2377 / 273-4) protein is Large ribosomal subunit protein bL36.